We begin with the raw amino-acid sequence, 358 residues long: Porphobilinogen deaminase, chloroplastic (358 aa).

Positions 1–24 (MPPPPRCAATTAHHSLLGSPTCLA) are cleaved as a signal peptide. Cys-290 carries the S-(dipyrrolylmethanemethyl)cysteine modification.

Belongs to the HMBS family. Requires dipyrromethane as cofactor.

Its subcellular location is the plastid. It localises to the chloroplast. The catalysed reaction is 4 porphobilinogen + H2O = hydroxymethylbilane + 4 NH4(+). Its pathway is porphyrin-containing compound metabolism; protoporphyrin-IX biosynthesis; coproporphyrinogen-III from 5-aminolevulinate: step 2/4. It participates in porphyrin-containing compound metabolism; chlorophyll biosynthesis. In terms of biological role, tetrapolymerization of the monopyrrole PBG into the hydroxymethylbilane pre-uroporphyrinogen in several discrete steps. The protein is Porphobilinogen deaminase, chloroplastic (HEMC) of Oryza sativa subsp. japonica (Rice).